Reading from the N-terminus, the 971-residue chain is Polyamine-modulated factor 1-binding protein 1 (971 aa).

Coiled coils occupy residues 37–69, 117–229, 282–325, 355–680, 706–827, and 879–916; these read NKQYHLRQLQQLKKKLLTLQQELEIRTQELQAS, EKLH…ACSN, LHVE…LREE, QKLS…SAIQ, QDDL…DEKE, and IAKLTGEKDHLHNVMAHLQQENKKLKNEIEEKKLKAGT.

Expressed in testis and more specifically in ODF, the sperm tail specific cytoskeletal structure. Also expressed in epididymides and brain.

Its subcellular location is the cell projection. It is found in the cilium. The protein localises to the flagellum. Functionally, required for normal spermatogenesis. It functions as a scaffold protein that attaches the sperm head-tail connecting piece to the nuclear envelope, thus maintaining sperm head and tail integrity. May also be involved in the general organization of cellular cytoskeleton. This is Polyamine-modulated factor 1-binding protein 1 (Pmfbp1) from Rattus norvegicus (Rat).